We begin with the raw amino-acid sequence, 323 residues long: Phosphopantothenate--cysteine ligase 2 (323 aa).

Belongs to the PPC synthetase family. As to quaternary structure, homodimer.

The enzyme catalyses (R)-4'-phosphopantothenate + L-cysteine + CTP = N-[(R)-4-phosphopantothenoyl]-L-cysteine + CMP + diphosphate + H(+). Its pathway is cofactor biosynthesis; coenzyme A biosynthesis; CoA from (R)-pantothenate: step 2/5. Its function is as follows. Catalyzes the first step in the biosynthesis of coenzyme A from vitamin B5, where cysteine is conjugated to 4'-phosphopantothenate to form 4-phosphopantothenoylcysteine. In Oryza sativa subsp. japonica (Rice), this protein is Phosphopantothenate--cysteine ligase 2.